We begin with the raw amino-acid sequence, 290 residues long: Nucleotide-binding protein Sde_3181 (290 aa).

8–15 provides a ligand contact to ATP; it reads GRSGSGKT. 60–63 serves as a coordination point for GTP; that stretch reads DARN.

Belongs to the RapZ-like family.

In terms of biological role, displays ATPase and GTPase activities. This Saccharophagus degradans (strain 2-40 / ATCC 43961 / DSM 17024) protein is Nucleotide-binding protein Sde_3181.